The sequence spans 126 residues: Defensin-like protein 183 (126 aa).

The first 26 residues, 1–26 (MEKALSLVVFIIFSIMLASVENKVNA), serve as a signal peptide directing secretion. 8 cysteine pairs are disulfide-bonded: Cys29-Cys68, Cys36-Cys55, Cys39-Cys62, Cys43-Cys64, Cys80-Cys126, Cys91-Cys111, Cys96-Cys120, and Cys100-Cys122.

The protein belongs to the DEFL family.

The protein resides in the secreted. The protein is Defensin-like protein 183 (LCR19) of Arabidopsis thaliana (Mouse-ear cress).